The chain runs to 638 residues: 1-deoxy-D-xylulose-5-phosphate synthase (638 aa).

Residues histidine 75 and 116-118 each bind thiamine diphosphate; that span reads AHS. A Mg(2+)-binding site is contributed by aspartate 147. Thiamine diphosphate is bound by residues 148–149, asparagine 177, tyrosine 288, and glutamate 370; that span reads GA. Mg(2+) is bound at residue asparagine 177.

It belongs to the transketolase family. DXPS subfamily. In terms of assembly, homodimer. The cofactor is Mg(2+). It depends on thiamine diphosphate as a cofactor.

The catalysed reaction is D-glyceraldehyde 3-phosphate + pyruvate + H(+) = 1-deoxy-D-xylulose 5-phosphate + CO2. Its pathway is metabolic intermediate biosynthesis; 1-deoxy-D-xylulose 5-phosphate biosynthesis; 1-deoxy-D-xylulose 5-phosphate from D-glyceraldehyde 3-phosphate and pyruvate: step 1/1. In terms of biological role, catalyzes the acyloin condensation reaction between C atoms 2 and 3 of pyruvate and glyceraldehyde 3-phosphate to yield 1-deoxy-D-xylulose-5-phosphate (DXP). This is 1-deoxy-D-xylulose-5-phosphate synthase from Cupriavidus necator (strain ATCC 17699 / DSM 428 / KCTC 22496 / NCIMB 10442 / H16 / Stanier 337) (Ralstonia eutropha).